The sequence spans 148 residues: Large ribosomal subunit protein uL15 (148 aa).

The disordered stretch occupies residues 1 to 47 (MTKLEDLRPTPGSVKPRKRVGRGIGSGHGKTSGRGHKGQKSRGSGKV). Residues 31-45 (TSGRGHKGQKSRGSG) show a composition bias toward basic residues.

This sequence belongs to the universal ribosomal protein uL15 family. Part of the 50S ribosomal subunit.

Its function is as follows. Binds to the 23S rRNA. The chain is Large ribosomal subunit protein uL15 from Pseudothermotoga lettingae (strain ATCC BAA-301 / DSM 14385 / NBRC 107922 / TMO) (Thermotoga lettingae).